The following is a 304-amino-acid chain: Ribonuclease BN (304 aa).

7 residues coordinate Zn(2+): His63, His65, Asp67, His68, His140, Asp211, and His269. The active-site Proton acceptor is Asp67.

Belongs to the RNase Z family. RNase BN subfamily. In terms of assembly, homodimer. It depends on Zn(2+) as a cofactor.

In terms of biological role, zinc phosphodiesterase, which has both exoribonuclease and endoribonuclease activities. This chain is Ribonuclease BN, found in Cronobacter sakazakii (strain ATCC BAA-894) (Enterobacter sakazakii).